Reading from the N-terminus, the 461-residue chain is Bifunctional protein GlmU (461 aa).

Residues 1–229 (MNKYVVILAA…FSESLGVNDR (229 aa)) are pyrophosphorylase. UDP-N-acetyl-alpha-D-glucosamine is bound by residues 8-11 (LAAG), Lys22, Gln72, and 77-78 (GT). Asp102 contributes to the Mg(2+) binding site. Residues Gly139, Glu154, Asn169, and Asn227 each coordinate UDP-N-acetyl-alpha-D-glucosamine. Asn227 is a Mg(2+) binding site. Residues 230–250 (IALAQATKIMQRRINEEHMRN) form a linker region. Residues 251–461 (GVSFIDPDTA…LPLAKDKEWE (211 aa)) form an N-acetyltransferase region. The UDP-N-acetyl-alpha-D-glucosamine site is built by Arg332 and Lys350. Catalysis depends on His362, which acts as the Proton acceptor. Residues Tyr365 and Asn376 each contribute to the UDP-N-acetyl-alpha-D-glucosamine site. Residues 385 to 386 (NY), Ala422, and Arg439 each bind acetyl-CoA.

It in the N-terminal section; belongs to the N-acetylglucosamine-1-phosphate uridyltransferase family. In the C-terminal section; belongs to the transferase hexapeptide repeat family. In terms of assembly, homotrimer. Mg(2+) serves as cofactor.

The protein resides in the cytoplasm. The enzyme catalyses alpha-D-glucosamine 1-phosphate + acetyl-CoA = N-acetyl-alpha-D-glucosamine 1-phosphate + CoA + H(+). The catalysed reaction is N-acetyl-alpha-D-glucosamine 1-phosphate + UTP + H(+) = UDP-N-acetyl-alpha-D-glucosamine + diphosphate. The protein operates within nucleotide-sugar biosynthesis; UDP-N-acetyl-alpha-D-glucosamine biosynthesis; N-acetyl-alpha-D-glucosamine 1-phosphate from alpha-D-glucosamine 6-phosphate (route II): step 2/2. Its pathway is nucleotide-sugar biosynthesis; UDP-N-acetyl-alpha-D-glucosamine biosynthesis; UDP-N-acetyl-alpha-D-glucosamine from N-acetyl-alpha-D-glucosamine 1-phosphate: step 1/1. It functions in the pathway bacterial outer membrane biogenesis; LPS lipid A biosynthesis. In terms of biological role, catalyzes the last two sequential reactions in the de novo biosynthetic pathway for UDP-N-acetylglucosamine (UDP-GlcNAc). The C-terminal domain catalyzes the transfer of acetyl group from acetyl coenzyme A to glucosamine-1-phosphate (GlcN-1-P) to produce N-acetylglucosamine-1-phosphate (GlcNAc-1-P), which is converted into UDP-GlcNAc by the transfer of uridine 5-monophosphate (from uridine 5-triphosphate), a reaction catalyzed by the N-terminal domain. The chain is Bifunctional protein GlmU from Lactobacillus johnsonii (strain CNCM I-12250 / La1 / NCC 533).